The following is a 913-amino-acid chain: MLGNIIKKAFGTRNERLLKGYSKIVSRINALEPEIQALSDADLRAKTDEFKKRLVDGEGLDALLPEAFAVVRETSVRTLGLRHFDVQIIGGLALHGGKIAEMRTGEGKTLGATMPAYLNALTGKGVHIVTVNDYLAKRDAEWMKPIYEFLGLTVGVNVPGMEPVEKQAAYAADITYGTNNEFGFDYLRDNMVFDLDQRVQRPLHYAIIDEVDSILIDEARTPLIISGQAEESSDLYVKINKFIPQLKLQKMEEGQKEEEVPPENRGDYTLDEKNRQAYLTEQGHRTIEALMIKQGLMQAGESLYDVSNISLMHYVYAALRAHTLFYRDVHYIVKNNEVIIVDEHTGRLMPGRRWSDGLHQAVEAKEGATIQLENQTLATITFQNYFRLYEKLSGMTATADTEAFELQKIYGLEVVVIPTNRPMIRRDESDQVYLTADAKFDAIVNEVKKRHEKGQPLLIGTASIEASELVARFLKKANIKHEILNAKNHEREAKIIAEAGRPGAVTIATNMAGRGTDIVLGGNLEAEMSELDNLAEEEIQKRKADWQKRHDAVIAAGGLHVLGTERHESRRIDNQLRGRSGRQGDPGSSQFYLSMEDNLLRIFAAERMSNMMRRLGVKEDDVIEHPWITRAIEKAQRRVEGMNFDIRKQLLEYDDVANDQRKVIYQQRFQLLQTDDISETIEAIREEAVSEMISSFVPPQSLEEEWDIPGLEKQIREDFGLALPIAQWLEKDETLHEETLHKRIIDEITKAYKAKEAKADPKAMREVEKTLMLQLLDHHWKEHLAAMDHLRQGIHLRGYAQKNPAQEYKRESFELFTQMLKRIKYELAATLSKLEIATEEQVAQQQRLYQQSAPELQYHHAEMTALQPEKEVAVAEQEEATQPFVRSQPKVGRNESCPCGSGKKYKQCHGKLS.

Residues Gln-87, 105 to 109, and Asp-517 contribute to the ATP site; that span reads GEGKT. Disordered stretches follow at residues 568-588 and 871-913; these read ESRRIDNQLRGRSGRQGDPGS and EVAV…GKLS. Zn(2+)-binding residues include Cys-897, Cys-899, Cys-908, and His-909. The segment covering 903-913 has biased composition (basic residues); it reads KKYKQCHGKLS.

The protein belongs to the SecA family. Monomer and homodimer. Part of the essential Sec protein translocation apparatus which comprises SecA, SecYEG and auxiliary proteins SecDF-YajC and YidC. Zn(2+) is required as a cofactor.

The protein resides in the cell inner membrane. It is found in the cytoplasm. It catalyses the reaction ATP + H2O + cellular proteinSide 1 = ADP + phosphate + cellular proteinSide 2.. Functionally, part of the Sec protein translocase complex. Interacts with the SecYEG preprotein conducting channel. Has a central role in coupling the hydrolysis of ATP to the transfer of proteins into and across the cell membrane, serving both as a receptor for the preprotein-SecB complex and as an ATP-driven molecular motor driving the stepwise translocation of polypeptide chains across the membrane. This Coxiella burnetii (strain RSA 493 / Nine Mile phase I) protein is Protein translocase subunit SecA.